Consider the following 219-residue polypeptide: UPF0376 protein C36C5.12 (219 aa).

The Cytoplasmic portion of the chain corresponds to 1–20 (MGRLDVKNSWIEFHQDEMTS). The chain crosses the membrane as a helical; Signal-anchor for type II membrane protein span at residues 21–43 (FLKLAIIGTVLLGVAHGANLTAA). Over 44–219 (EKETYCELRS…VSKCDFSRLG (176 aa)) the chain is Extracellular. 2 N-linked (GlcNAc...) asparagine glycosylation sites follow: N104 and N204.

It belongs to the UPF0376 family.

Its subcellular location is the membrane. The sequence is that of UPF0376 protein C36C5.12 from Caenorhabditis elegans.